A 362-amino-acid chain; its full sequence is Erythritol/L-threitol dehydrogenase (362 aa).

Residues Cys45, His76, Glu77, Cys109, Cys112, Cys115, and Cys123 each coordinate Zn(2+). NAD(+)-binding residues include Ile195 and Asp215.

Belongs to the zinc-containing alcohol dehydrogenase family. It depends on Zn(2+) as a cofactor.

The enzyme catalyses erythritol + NAD(+) = D-erythrulose + NADH + H(+). It carries out the reaction L-threitol + NAD(+) = L-erythrulose + NADH + H(+). Its pathway is carbohydrate metabolism; erythritol degradation. It participates in carbohydrate metabolism; L-threitol degradation. In terms of biological role, catalyzes the NAD-dependent reversible oxidation of erythritol and L-threitol. Involved in the degradation pathways of erythritol and L-threitol, that allow M.smegmatis to grow on these compounds as the sole carbon source. The protein is Erythritol/L-threitol dehydrogenase of Mycolicibacterium smegmatis (strain ATCC 700084 / mc(2)155) (Mycobacterium smegmatis).